Consider the following 358-residue polypeptide: MQKIIHVDMDCFYAAVEMRDFPELRGKPIAVGGRSDRRGVISTCNYEARQFGVRSAMASGYALKLCPDLILVPGRMQVYKEVSNQIRAVFERYTDLIEPLSLDEAYLDVTESSHCKGSATLMAEAIRAEILAETGLTASAGIAPVKFLAKIASDLNKPNGQYVIRPEMIEEFVKTLPLIKIPGVGKVTAKKLADLGLHTCSDIQAYPEPKLVERFGKFGSVLIERSKGIDKRAILPNRERKSVGVETTLAKDIHTLEQCRAVMPQLIQELGARVSRSAKDRAINKQVVKLKFEDFKQTTIEHRSDEISVNLFYQLLEQAMERQHERGIRLLGVSVGLASNSIASEQADVDSSQMDLGF.

Residues 4–185 (IIHVDMDCFY…LPLIKIPGVG (182 aa)) enclose the UmuC domain. Positions 8 and 103 each coordinate Mg(2+). The active site involves E104.

Belongs to the DNA polymerase type-Y family. As to quaternary structure, monomer. Requires Mg(2+) as cofactor.

Its subcellular location is the cytoplasm. It catalyses the reaction DNA(n) + a 2'-deoxyribonucleoside 5'-triphosphate = DNA(n+1) + diphosphate. In terms of biological role, poorly processive, error-prone DNA polymerase involved in untargeted mutagenesis. Copies undamaged DNA at stalled replication forks, which arise in vivo from mismatched or misaligned primer ends. These misaligned primers can be extended by PolIV. Exhibits no 3'-5' exonuclease (proofreading) activity. May be involved in translesional synthesis, in conjunction with the beta clamp from PolIII. This Shewanella halifaxensis (strain HAW-EB4) protein is DNA polymerase IV.